A 216-amino-acid polypeptide reads, in one-letter code: MTSKEELLQELSEAIISCKKDAVLAAVEKAKQVMEPAEIIENGLAAGMNQVGVLFERGKLFLPHVMMAADAMTAGVKVLEADMPAGTETKKLGVIVNGTVEGDVHDIGKSIVSTMLQSAGFEVHDIGRDVPIKNFVEKAKEVNANMIGISALMTTTLQGQREVIELLKEEGMREKVKVMVGGAPATQAWADKIGADCYAENASEAVAKAKELLVGK.

The B12-binding N-terminal domain occupies 1 to 91 (MTSKEELLQE…DMPAGTETKK (91 aa)). A B12-binding domain is found at 92–216 (LGVIVNGTVE…AKAKELLVGK (125 aa)). Residue histidine 105 coordinates methylcob(III)alamin.

Belongs to the methylamine corrinoid protein family.

The protein operates within one-carbon metabolism; methanogenesis from dimethylamine. Functionally, acts as a methyl group carrier between MtbB and MtbA. The chain is Dimethylamine corrinoid protein 1 (mtbC1) from Methanosarcina mazei (strain ATCC BAA-159 / DSM 3647 / Goe1 / Go1 / JCM 11833 / OCM 88) (Methanosarcina frisia).